A 273-amino-acid chain; its full sequence is Ribosomal RNA small subunit methyltransferase A (273 aa).

6 residues coordinate S-adenosyl-L-methionine: Asn18, Leu20, Gly45, Glu66, Asp91, and Asn113.

Belongs to the class I-like SAM-binding methyltransferase superfamily. rRNA adenine N(6)-methyltransferase family. RsmA subfamily.

It is found in the cytoplasm. The enzyme catalyses adenosine(1518)/adenosine(1519) in 16S rRNA + 4 S-adenosyl-L-methionine = N(6)-dimethyladenosine(1518)/N(6)-dimethyladenosine(1519) in 16S rRNA + 4 S-adenosyl-L-homocysteine + 4 H(+). In terms of biological role, specifically dimethylates two adjacent adenosines (A1518 and A1519) in the loop of a conserved hairpin near the 3'-end of 16S rRNA in the 30S particle. May play a critical role in biogenesis of 30S subunits. This is Ribosomal RNA small subunit methyltransferase A from Salmonella schwarzengrund (strain CVM19633).